The sequence spans 264 residues: Tryptophan synthase alpha chain (264 aa).

Catalysis depends on proton acceptor residues Glu-44 and Asp-55.

The protein belongs to the TrpA family. As to quaternary structure, tetramer of two alpha and two beta chains.

The enzyme catalyses (1S,2R)-1-C-(indol-3-yl)glycerol 3-phosphate + L-serine = D-glyceraldehyde 3-phosphate + L-tryptophan + H2O. Its pathway is amino-acid biosynthesis; L-tryptophan biosynthesis; L-tryptophan from chorismate: step 5/5. Functionally, the alpha subunit is responsible for the aldol cleavage of indoleglycerol phosphate to indole and glyceraldehyde 3-phosphate. The sequence is that of Tryptophan synthase alpha chain from Lactiplantibacillus plantarum (strain ATCC BAA-793 / NCIMB 8826 / WCFS1) (Lactobacillus plantarum).